A 229-amino-acid polypeptide reads, in one-letter code: Potassium/proton antiporter CemA (229 aa).

Helical transmembrane passes span 6-26, 107-127, 152-172, and 189-209; these read AFIP…ISLC, IFHF…SFWG, FLIL…GWEL, and ILSG…KYWI.

It belongs to the CemA family.

The protein resides in the plastid. It is found in the chloroplast inner membrane. It catalyses the reaction K(+)(in) + H(+)(out) = K(+)(out) + H(+)(in). Functionally, contributes to K(+)/H(+) antiport activity by supporting proton efflux to control proton extrusion and homeostasis in chloroplasts in a light-dependent manner to modulate photosynthesis. Prevents excessive induction of non-photochemical quenching (NPQ) under continuous-light conditions. Indirectly promotes efficient inorganic carbon uptake into chloroplasts. The sequence is that of Potassium/proton antiporter CemA from Aethionema grandiflorum (Persian stone-cress).